Consider the following 177-residue polypeptide: Peptide methionine sulfoxide reductase MsrA 2 (177 aa).

Cys12 is a catalytic residue.

Belongs to the MsrA Met sulfoxide reductase family.

The enzyme catalyses L-methionyl-[protein] + [thioredoxin]-disulfide + H2O = L-methionyl-(S)-S-oxide-[protein] + [thioredoxin]-dithiol. It carries out the reaction [thioredoxin]-disulfide + L-methionine + H2O = L-methionine (S)-S-oxide + [thioredoxin]-dithiol. Its function is as follows. Has an important function as a repair enzyme for proteins that have been inactivated by oxidation. Catalyzes the reversible oxidation-reduction of methionine sulfoxide in proteins to methionine. This chain is Peptide methionine sulfoxide reductase MsrA 2, found in Staphylococcus aureus (strain MRSA252).